The sequence spans 156 residues: Small ribosomal subunit protein uS7 (156 aa).

The protein belongs to the universal ribosomal protein uS7 family. In terms of assembly, part of the 30S ribosomal subunit. Contacts proteins S9 and S11.

In terms of biological role, one of the primary rRNA binding proteins, it binds directly to 16S rRNA where it nucleates assembly of the head domain of the 30S subunit. Is located at the subunit interface close to the decoding center, probably blocks exit of the E-site tRNA. This chain is Small ribosomal subunit protein uS7, found in Shewanella halifaxensis (strain HAW-EB4).